A 420-amino-acid chain; its full sequence is Gamma-glutamyl phosphate reductase (420 aa).

This sequence belongs to the gamma-glutamyl phosphate reductase family.

It localises to the cytoplasm. The catalysed reaction is L-glutamate 5-semialdehyde + phosphate + NADP(+) = L-glutamyl 5-phosphate + NADPH + H(+). The protein operates within amino-acid biosynthesis; L-proline biosynthesis; L-glutamate 5-semialdehyde from L-glutamate: step 2/2. Its function is as follows. Catalyzes the NADPH-dependent reduction of L-glutamate 5-phosphate into L-glutamate 5-semialdehyde and phosphate. The product spontaneously undergoes cyclization to form 1-pyrroline-5-carboxylate. The sequence is that of Gamma-glutamyl phosphate reductase from Streptococcus pneumoniae serotype 4 (strain ATCC BAA-334 / TIGR4).